The primary structure comprises 321 residues: Glycerol-3-phosphate dehydrogenase [NAD(P)+] (321 aa).

The NADPH site is built by serine 10, phenylalanine 11, arginine 31, arginine 32, and lysine 104. Lysine 104 and glycine 132 together coordinate sn-glycerol 3-phosphate. Residue alanine 136 participates in NADPH binding. Lysine 186, aspartate 238, serine 248, arginine 249, and asparagine 250 together coordinate sn-glycerol 3-phosphate. The Proton acceptor role is filled by lysine 186. NADPH is bound at residue arginine 249. Glutamate 272 provides a ligand contact to NADPH.

It belongs to the NAD-dependent glycerol-3-phosphate dehydrogenase family.

It is found in the cytoplasm. The catalysed reaction is sn-glycerol 3-phosphate + NAD(+) = dihydroxyacetone phosphate + NADH + H(+). The enzyme catalyses sn-glycerol 3-phosphate + NADP(+) = dihydroxyacetone phosphate + NADPH + H(+). Its function is as follows. Catalyzes the reduction of the glycolytic intermediate dihydroxyacetone phosphate (DHAP) to sn-glycerol 3-phosphate (G3P). This chain is Glycerol-3-phosphate dehydrogenase [NAD(P)+], found in Methanothermobacter thermautotrophicus (strain ATCC 29096 / DSM 1053 / JCM 10044 / NBRC 100330 / Delta H) (Methanobacterium thermoautotrophicum).